The chain runs to 222 residues: Voltage-dependent calcium channel gamma-1 subunit (222 aa).

Over 1-10 (MSPTEAPKVR) the chain is Cytoplasmic. A helical membrane pass occupies residues 11 to 29 (VTLFCILVGIVLAMTAVVS). At 30 to 108 (DHWAVLSPHM…TQKEYSISAA (79 aa)) the chain is on the extracellular side. N-linked (GlcNAc...) asparagine glycosylation is found at Asn-43 and Asn-79. Cys-57 and Cys-80 are joined by a disulfide. Residues 109–129 (AISVFSLGFLIMGTICALMAF) form a helical membrane-spanning segment. Over 130–134 (RKKRD) the chain is Cytoplasmic. The chain crosses the membrane as a helical span at residues 135 to 155 (YLLRPASMFYVFAGLCLFVSL). Topologically, residues 156–179 (EVMRQSVKRMIDSEDTVWIEYYYS) are extracellular. Residues 180-204 (WSFACACAAFVLLFLGGISLLLFSL) form a helical membrane-spanning segment. At 205–222 (PRMPQNPWESCMDAEPEH) the chain is on the cytoplasmic side.

It belongs to the PMP-22/EMP/MP20 family. CACNG subfamily. Component of a calcium channel complex consisting of a pore-forming alpha subunit (CACNA1S) and the ancillary subunits CACNB1 or CACNB2, CACNG1 and CACNA2D1. The channel complex contains alpha, beta, gamma and delta subunits in a 1:1:1:1 ratio, i.e. it contains either CACNB1 or CACNB2. Post-translationally, N-glycosylated. Skeletal muscle (at protein level).

The protein resides in the cell membrane. It localises to the sarcolemma. In terms of biological role, regulatory subunit of the voltage-gated calcium channel that gives rise to L-type calcium currents in skeletal muscle. Regulates channel inactivation kinetics. In Oryctolagus cuniculus (Rabbit), this protein is Voltage-dependent calcium channel gamma-1 subunit (CACNG1).